Reading from the N-terminus, the 493-residue chain is Cytochrome P450 2E1 (493 aa).

298 to 303 serves as a coordination point for substrate; that stretch reads FAGTET. C437 is a binding site for heme.

The protein belongs to the cytochrome P450 family. In terms of assembly, interacts with chaperones HSP70 and HSP90; this interaction is required for initial targeting to mitochondria. Requires heme as cofactor. In terms of tissue distribution, highest level in the liver and to a lesser extent in the kidney, with a higher level in the male kidney than in the female.

It localises to the endoplasmic reticulum membrane. It is found in the microsome membrane. The protein resides in the mitochondrion inner membrane. It carries out the reaction an organic molecule + reduced [NADPH--hemoprotein reductase] + O2 = an alcohol + oxidized [NADPH--hemoprotein reductase] + H2O + H(+). It catalyses the reaction (5Z,8Z,11Z)-eicosatrienoate + reduced [NADPH--hemoprotein reductase] + O2 = 19-hydroxy-(5Z,8Z,11Z)-eicosatrienoate + oxidized [NADPH--hemoprotein reductase] + H2O + H(+). The enzyme catalyses (5Z,8Z,11Z,14Z,17Z)-eicosapentaenoate + reduced [NADPH--hemoprotein reductase] + O2 = 19-hydroxy-(5Z,8Z,11Z,14Z,17Z)-eicosapentaenoate + oxidized [NADPH--hemoprotein reductase] + H2O + H(+). The catalysed reaction is (4Z,7Z,10Z,13Z,16Z,19Z)-docosahexaenoate + reduced [NADPH--hemoprotein reductase] + O2 = 21-hydroxy-(4Z,7Z,10Z,13Z,16Z,19Z)-docosahexaenoate + oxidized [NADPH--hemoprotein reductase] + H2O + H(+). It carries out the reaction dodecanoate + reduced [NADPH--hemoprotein reductase] + O2 = 11-hydroxydodecanoate + oxidized [NADPH--hemoprotein reductase] + H2O + H(+). It catalyses the reaction tetradecanoate + reduced [NADPH--hemoprotein reductase] + O2 = 13-hydroxytetradecanoate + oxidized [NADPH--hemoprotein reductase] + H2O + H(+). The enzyme catalyses 4-nitrophenol + NADPH + O2 + H(+) = 4-nitrocatechol + NADP(+) + H2O. The protein operates within lipid metabolism; fatty acid metabolism. The omega-1 hydroxylase activity is stimulated by cytochrome b5. A cytochrome P450 monooxygenase involved in the metabolism of fatty acids. Mechanistically, uses molecular oxygen inserting one oxygen atom into a substrate, and reducing the second into a water molecule, with two electrons provided by NADPH via cytochrome P450 reductase (NADPH--hemoprotein reductase). Catalyzes the hydroxylation of carbon-hydrogen bonds. Hydroxylates fatty acids specifically at the omega-1 position displaying the highest catalytic activity for saturated fatty acids. May be involved in the oxidative metabolism of xenobiotics. The sequence is that of Cytochrome P450 2E1 (Cyp2e1) from Mus musculus (Mouse).